A 168-amino-acid polypeptide reads, in one-letter code: G/U mismatch-specific DNA glycosylase (168 aa).

This sequence belongs to the uracil-DNA glycosylase (UDG) superfamily. TDG/mug family. In terms of assembly, binds DNA as a monomer.

It is found in the cytoplasm. It carries out the reaction Specifically hydrolyzes mismatched double-stranded DNA and polynucleotides, releasing free uracil.. In terms of biological role, excises ethenocytosine and uracil, which can arise by alkylation or deamination of cytosine, respectively, from the corresponding mispairs with guanine in ds-DNA. It is capable of hydrolyzing the carbon-nitrogen bond between the sugar-phosphate backbone of the DNA and the mispaired base. The complementary strand guanine functions in substrate recognition. Required for DNA damage lesion repair in stationary-phase cells. The protein is G/U mismatch-specific DNA glycosylase of Salmonella dublin (strain CT_02021853).